The primary structure comprises 422 residues: MDRFTIKGPVKLQGEVEISGSKNAALPILMATLLTDEKCVLNRVPNLRDIRTTFKLLEVLGKKVEYNNGTAVITKNKELNSILPYELVKQMRASFWVAGPLLARLKHTQIPLPGGCAIGVRPVDIHLQGFKKFGAAESTKKGDVVISADELKPAKIVLRFPSVGATINIMMCASLIPGKTIIENAAKEPEVEDLICALKTMGAQISIDSKGRIIVEGKKTLGSMTHTVVADRIETGTFILAAAATKGDVVIKNCVPEHNDILLENLKDAGFGVSVGQGRIHITAPSNGKIKPVGIRTMPYPGFATDLQAPYMVLLCVADGGSDITEDIFENRYMHAPELVRMGADITIEKTMAKVKGVKELSGANVMASDLRGGAALVIAALCAAGDTVIDRVYHIDRGYENIEAKFAALGAKIVRDNPLKD.

A phosphoenolpyruvate-binding site is contributed by 22–23 (KN). Residue R92 participates in UDP-N-acetyl-alpha-D-glucosamine binding. C116 functions as the Proton donor in the catalytic mechanism. At C116 the chain carries 2-(S-cysteinyl)pyruvic acid O-phosphothioketal. UDP-N-acetyl-alpha-D-glucosamine-binding residues include D306 and I328.

Belongs to the EPSP synthase family. MurA subfamily.

It is found in the cytoplasm. The catalysed reaction is phosphoenolpyruvate + UDP-N-acetyl-alpha-D-glucosamine = UDP-N-acetyl-3-O-(1-carboxyvinyl)-alpha-D-glucosamine + phosphate. The protein operates within cell wall biogenesis; peptidoglycan biosynthesis. Cell wall formation. Adds enolpyruvyl to UDP-N-acetylglucosamine. The protein is UDP-N-acetylglucosamine 1-carboxyvinyltransferase of Elusimicrobium minutum (strain Pei191).